A 450-amino-acid chain; its full sequence is 23S rRNA (uracil(1939)-C(5))-methyltransferase RlmD (450 aa).

In terms of domain architecture, TRAM spans 1 to 62; it reads MPVAGPLDIV…PSYEQAGVVN (62 aa). Residues cysteine 75, cysteine 81, cysteine 84, and cysteine 163 each coordinate [4Fe-4S] cluster. Glutamine 271, phenylalanine 300, asparagine 305, glutamate 321, asparagine 349, and aspartate 370 together coordinate S-adenosyl-L-methionine. Cysteine 406 serves as the catalytic Nucleophile.

The protein belongs to the class I-like SAM-binding methyltransferase superfamily. RNA M5U methyltransferase family. RlmD subfamily.

The enzyme catalyses uridine(1939) in 23S rRNA + S-adenosyl-L-methionine = 5-methyluridine(1939) in 23S rRNA + S-adenosyl-L-homocysteine + H(+). Functionally, catalyzes the formation of 5-methyl-uridine at position 1939 (m5U1939) in 23S rRNA. The sequence is that of 23S rRNA (uracil(1939)-C(5))-methyltransferase RlmD from Ralstonia pickettii (strain 12J).